The sequence spans 702 residues: Vacuolar protein sorting-associated protein 52 homolog (702 aa).

The stretch at 505–535 forms a coiled coil; it reads KEMGAKMEAVLENSEDSIEQLLTRMSAMQQT.

Belongs to the VPS52 family. In terms of assembly, component of the Golgi-associated retrograde protein (GARP) complex, also called VFT (VPS fifty-three) complex, composed of vps-51, vps-52, vps-53 and vps-54. Within the complex interacts with vps-53 and vps-54. Interacts with the small GTPases rab-6.1 and rab-6.2. Ubiquitously expressed, with particularly strong expression in neuronal cells. Specifically expressed in head and tail neurons and in the pharynx and ventral cord motor neurons.

It localises to the golgi apparatus. The protein resides in the trans-Golgi network. The protein localises to the perikaryon. Its subcellular location is the cytoplasm. It is found in the perinuclear region. Its function is as follows. Acts as a component of the GARP complex that is involved in retrograde transport from early and late endosomes to the trans-Golgi network (TGN). The GARP complex facilitates tethering as well as SNARE complex assembly at the Golgi. Plays a role in the trafficking of cargo to dense-core vesicles, probably through association with the EARP-interacting protein eipr-1. Important for neuronal function. The polypeptide is Vacuolar protein sorting-associated protein 52 homolog (Caenorhabditis elegans).